Reading from the N-terminus, the 592-residue chain is Protein kinase C zeta type (592 aa).

The 84-residue stretch at 15 to 98 folds into the PB1 domain; the sequence is RVRLKAHYGG…EGLIIHVFPS (84 aa). The interval 79–145 is interaction with SQSTM1; that stretch reads AFRLARQCRD…KRFNRRAYCG (67 aa). The Phorbol-ester/DAG-type zinc-finger motif lies at 130 to 180; the sequence is GHLFQAKRFNRRAYCGQCSERIWGLARQGYRCINCKLLVHKRCHGLVPLTC. One can recognise a Protein kinase domain in the interval 252–518; the sequence is FDLIRVIGRG…FSDIKSHAFF (267 aa). Residues 258 to 266 and Lys-281 each bind ATP; that span reads IGRGSYAKV. Asp-376 (proton acceptor) is an active-site residue. Thr-410 carries the phosphothreonine; by PDPK1 and PI3K modification. Residues 519-590 enclose the AGC-kinase C-terminal domain; sequence RSIDWDLLEK…INPLLLSTEE (72 aa). Thr-560 is modified (phosphothreonine). Ser-591 carries the phosphoserine modification.

Belongs to the protein kinase superfamily. AGC Ser/Thr protein kinase family. PKC subfamily. In terms of assembly, forms a ternary complex with SQSTM1 and KCNAB2. Forms another ternary complex with SQSTM1 and GABRR3. Forms a complex with SQSTM1 and MAP2K5. Interacts with PARD6A, PARD6B, PARD6G and SQSTM1. Part of a complex with PARD3, PARD6A or PARD6B or PARD6G and CDC42 or RAC1. Interacts with ADAP1/CENTA1. Forms a ternary complex composed of SQSTM1 and PAWR. Interacts directly with SQSTM1. Interacts with IKBKB. Interacts (via the protein kinase domain) with WWC1. Forms a tripartite complex with WWC1 and DDR1, but predominantly in the absence of collagen. Component of the Par polarity complex, composed of at least phosphorylated PRKCZ, PARD3 and TIAM1. Interacts with PDPK1 (via N-terminal region). Interacts with WDFY2 (via WD repeats 1-3). Interacts with VAMP2. Forms a complex with WDFY2 and VAMP2. Interacts with APPL1. Interacts with WWC1, WWC2 and WWC3. Post-translationally, CDH5 is required for its phosphorylation at Thr-410. Phosphorylated by protein kinase PDPK1; phosphorylation is inhibited by the apoptotic C-terminal cleavage product of PKN2. Phosphorylation at Thr-410 by PI3K activates the kinase. Expressed in brain, and to a lesser extent in lung, kidney and testis.

Its subcellular location is the cytoplasm. It is found in the endosome. It localises to the cell junction. The protein localises to the membrane. It carries out the reaction L-seryl-[protein] + ATP = O-phospho-L-seryl-[protein] + ADP + H(+). It catalyses the reaction L-threonyl-[protein] + ATP = O-phospho-L-threonyl-[protein] + ADP + H(+). With respect to regulation, atypical PKCs (PRKCI and PRKCZ) exhibit an elevated basal enzymatic activity (that may be due to the interaction with SMG1 or SQSTM1) and are not regulated by diacylglycerol, phosphatidylserine, phorbol esters or calcium ions. Two specific sites, Thr-410 (activation loop of the kinase domain) and Thr-560 (turn motif), need to be phosphorylated for its full activation. Phosphatidylinositol 3,4,5-trisphosphate might be a physiological activator. Isoform 2: Constitutively active. In terms of biological role, calcium- and diacylglycerol-independent serine/threonine-protein kinase that functions in phosphatidylinositol 3-kinase (PI3K) pathway and mitogen-activated protein (MAP) kinase cascade, and is involved in NF-kappa-B activation, mitogenic signaling, cell proliferation, cell polarity, inflammatory response and maintenance of long-term potentiation (LTP). Upon lipopolysaccharide (LPS) treatment in macrophages, or following mitogenic stimuli, functions downstream of PI3K to activate MAP2K1/MEK1-MAPK1/ERK2 signaling cascade independently of RAF1 activation. Required for insulin-dependent activation of AKT3, but may function as an adapter rather than a direct activator. Upon insulin treatment may act as a downstream effector of PI3K and contribute to the activation of translocation of the glucose transporter SLC2A4/GLUT4 and subsequent glucose transport in adipocytes. In EGF-induced cells, binds and activates MAP2K5/MEK5-MAPK7/ERK5 independently of its kinase activity and can activate JUN promoter through MEF2C. Through binding with SQSTM1/p62, functions in interleukin-1 signaling and activation of NF-kappa-B with the specific adapters RIPK1 and TRAF6. Participates in TNF-dependent transactivation of NF-kappa-B by phosphorylating and activating IKBKB kinase, which in turn leads to the degradation of NF-kappa-B inhibitors. In migrating astrocytes, forms a cytoplasmic complex with PARD6A and is recruited by CDC42 to function in the establishment of cell polarity along with the microtubule motor and dynein. In association with FEZ1, stimulates neuronal differentiation in PC12 cells. In the inflammatory response, is required for the T-helper 2 (Th2) differentiation process, including interleukin production, efficient activation of JAK1 and the subsequent phosphorylation and nuclear translocation of STAT6. May be involved in development of allergic airway inflammation (asthma), a process dependent on Th2 immune response. In the NF-kappa-B-mediated inflammatory response, can relieve SETD6-dependent repression of NF-kappa-B target genes by phosphorylating the RELA subunit at 'Ser-311'. Phosphorylates VAMP2 in vitro. Phosphorylates and activates LRRK1, which phosphorylates RAB proteins involved in intracellular trafficking. Involved in late synaptic long term potention phase in CA1 hippocampal cells and long term memory maintenance. The protein is Protein kinase C zeta type (PRKCZ) of Homo sapiens (Human).